Reading from the N-terminus, the 588-residue chain is Nucleoporin ndc-1 (588 aa).

The span at M1–T12 shows a compositional bias: polar residues. The tract at residues M1 to V55 is disordered. Topologically, residues M1–R79 are cytoplasmic. The segment covering P31 to R48 has biased composition (low complexity). The chain crosses the membrane as a helical span at residues L80–L100. At K101–N122 the chain is on the perinuclear space side. The chain crosses the membrane as a helical span at residues A123 to I143. Topologically, residues K144–T159 are cytoplasmic. The chain crosses the membrane as a helical span at residues F160–F180. Residues C181–E190 lie on the Perinuclear space side of the membrane. The chain crosses the membrane as a helical span at residues F191–S211. Residues D212–A255 are Cytoplasmic-facing. A helical transmembrane segment spans residues V256 to L276. A topological domain (perinuclear space) is located at residue N277. The chain crosses the membrane as a helical span at residues I278–S298. The Cytoplasmic segment spans residues M299–L588.

The protein belongs to the NDC1 family.

Its subcellular location is the nucleus. It is found in the nuclear pore complex. The protein resides in the nucleus membrane. Component of the nuclear pore complex (NPC), which plays a key role in de novo assembly and insertion of NPC in the nuclear envelope. Plays a role in postmitotic nuclear pore complex assembly potentially by promoting localization of nuclear pore complex proteins to the nuclear rim. The polypeptide is Nucleoporin ndc-1 (Caenorhabditis elegans).